The chain runs to 274 residues: Ethanolamine ammonia-lyase small subunit (274 aa).

Positions 161, 182, and 211 each coordinate adenosylcob(III)alamin.

This sequence belongs to the EutC family. The basic unit is a heterodimer which dimerizes to form tetramers. The heterotetramers trimerize; 6 large subunits form a core ring with 6 small subunits projecting outwards. Adenosylcob(III)alamin is required as a cofactor.

It is found in the bacterial microcompartment. The enzyme catalyses ethanolamine = acetaldehyde + NH4(+). It functions in the pathway amine and polyamine degradation; ethanolamine degradation. Functionally, catalyzes the deamination of various vicinal amino-alcohols to oxo compounds. Allows this organism to utilize ethanolamine as the sole source of nitrogen and carbon in the presence of external vitamin B12. This chain is Ethanolamine ammonia-lyase small subunit, found in Pseudomonas fluorescens (strain Pf0-1).